A 443-amino-acid polypeptide reads, in one-letter code: Ribosomal protein uS12 methylthiotransferase RimO (443 aa).

Residues 1 to 114 (MGFVSLGCPK…VMQAVHTHLP (114 aa)) enclose the MTTase N-terminal domain. Residues cysteine 8, cysteine 44, cysteine 73, cysteine 145, cysteine 149, and cysteine 152 each coordinate [4Fe-4S] cluster. One can recognise a Radical SAM core domain in the interval 131-372 (LTPKHYAYLK…MEVAEEVSAR (242 aa)). A TRAM domain is found at 375-443 (QRKVGQTLRV…ADGHDLWGAV (69 aa)).

The protein belongs to the methylthiotransferase family. RimO subfamily. The cofactor is [4Fe-4S] cluster.

The protein resides in the cytoplasm. It carries out the reaction L-aspartate(89)-[ribosomal protein uS12]-hydrogen + (sulfur carrier)-SH + AH2 + 2 S-adenosyl-L-methionine = 3-methylsulfanyl-L-aspartate(89)-[ribosomal protein uS12]-hydrogen + (sulfur carrier)-H + 5'-deoxyadenosine + L-methionine + A + S-adenosyl-L-homocysteine + 2 H(+). In terms of biological role, catalyzes the methylthiolation of an aspartic acid residue of ribosomal protein uS12. The sequence is that of Ribosomal protein uS12 methylthiotransferase RimO from Cupriavidus necator (strain ATCC 17699 / DSM 428 / KCTC 22496 / NCIMB 10442 / H16 / Stanier 337) (Ralstonia eutropha).